The sequence spans 289 residues: 4-diphosphocytidyl-2-C-methyl-D-erythritol kinase (289 aa).

Lys-10 is an active-site residue. 94–104 (PVAAGLAGGSS) provides a ligand contact to ATP. Asp-136 is a catalytic residue.

The protein belongs to the GHMP kinase family. IspE subfamily.

The enzyme catalyses 4-CDP-2-C-methyl-D-erythritol + ATP = 4-CDP-2-C-methyl-D-erythritol 2-phosphate + ADP + H(+). It functions in the pathway isoprenoid biosynthesis; isopentenyl diphosphate biosynthesis via DXP pathway; isopentenyl diphosphate from 1-deoxy-D-xylulose 5-phosphate: step 3/6. Catalyzes the phosphorylation of the position 2 hydroxy group of 4-diphosphocytidyl-2C-methyl-D-erythritol. In Bacillus anthracis, this protein is 4-diphosphocytidyl-2-C-methyl-D-erythritol kinase.